The primary structure comprises 301 residues: Methionyl-tRNA formyltransferase (301 aa).

109–112 (SLLP) serves as a coordination point for (6S)-5,6,7,8-tetrahydrofolate.

The protein belongs to the Fmt family.

It catalyses the reaction L-methionyl-tRNA(fMet) + (6R)-10-formyltetrahydrofolate = N-formyl-L-methionyl-tRNA(fMet) + (6S)-5,6,7,8-tetrahydrofolate + H(+). Functionally, attaches a formyl group to the free amino group of methionyl-tRNA(fMet). The formyl group appears to play a dual role in the initiator identity of N-formylmethionyl-tRNA by promoting its recognition by IF2 and preventing the misappropriation of this tRNA by the elongation apparatus. This is Methionyl-tRNA formyltransferase from Anaplasma marginale (strain St. Maries).